Consider the following 205-residue polypeptide: MKREKGLLIVLSGPAGVGKGTVCGALRNQNTAIEYSVSATTRKPREGEKHGVNYFFKTREQFEQMIEDGKLLEWAEYVGNYYGTPIDYVQETINAGKDIILEIEVQGAQKVRTVFPEGVFIFLAPPSLKELRDRIVGRGTETEDIINERMTVAKEEIDLMTMYDYVVENDKVEWAVERIKAIVTAEHCKRERLIKKYKELVEVEK.

One can recognise a Guanylate kinase-like domain in the interval 6 to 184 (GLLIVLSGPA…AVERIKAIVT (179 aa)). Residue 13–20 (GPAGVGKG) coordinates ATP.

The protein belongs to the guanylate kinase family.

The protein resides in the cytoplasm. The catalysed reaction is GMP + ATP = GDP + ADP. Its function is as follows. Essential for recycling GMP and indirectly, cGMP. The sequence is that of Guanylate kinase from Shouchella clausii (strain KSM-K16) (Alkalihalobacillus clausii).